Here is a 92-residue protein sequence, read N- to C-terminus: Small ribosomal subunit protein uS19c (92 aa).

This sequence belongs to the universal ribosomal protein uS19 family.

The protein localises to the plastid. It is found in the chloroplast. Protein S19 forms a complex with S13 that binds strongly to the 16S ribosomal RNA. This chain is Small ribosomal subunit protein uS19c (rps19), found in Anthoceros angustus (Hornwort).